A 423-amino-acid polypeptide reads, in one-letter code: uncharacterized protein (423 aa).

Positions 181, 183, and 184 each coordinate Mg(2+). The residue at position 181 (Lys-181) is an N6-carboxylysine.

It belongs to the RuBisCO large chain family. Type IV subfamily. It depends on Mg(2+) as a cofactor.

Its function is as follows. May be involved in sulfur metabolism and oxidative stress response. Does not show RuBisCO activity. This is an uncharacterized protein from Bordetella bronchiseptica (strain ATCC BAA-588 / NCTC 13252 / RB50) (Alcaligenes bronchisepticus).